Here is a 237-residue protein sequence, read N- to C-terminus: Uridylate kinase (237 aa).

ATP is bound at residue 11–14 (KLSG). Gly-53 lines the UMP pocket. Positions 54 and 58 each coordinate ATP. UMP-binding positions include Asp-73 and 134 to 141 (TGNPFFTT). Residues Thr-161, Tyr-167, and Asp-170 each coordinate ATP.

The protein belongs to the UMP kinase family. As to quaternary structure, homohexamer.

It is found in the cytoplasm. The enzyme catalyses UMP + ATP = UDP + ADP. It participates in pyrimidine metabolism; CTP biosynthesis via de novo pathway; UDP from UMP (UMPK route): step 1/1. With respect to regulation, inhibited by UTP. Its function is as follows. Catalyzes the reversible phosphorylation of UMP to UDP. The chain is Uridylate kinase from Burkholderia vietnamiensis (strain G4 / LMG 22486) (Burkholderia cepacia (strain R1808)).